Here is an 81-residue protein sequence, read N- to C-terminus: Photosystem I iron-sulfur center (81 aa).

2 4Fe-4S ferredoxin-type domains span residues 2-31 (SHTV…MVPW) and 39-68 (VASS…IRVY). Residues C11, C14, C17, C21, C48, C51, C54, and C58 each coordinate [4Fe-4S] cluster.

In terms of assembly, the cyanobacterial PSI reaction center is composed of one copy each of PsaA,B,C,D,E,F,I,J,K,L,M and X, and forms trimeric complexes. [4Fe-4S] cluster is required as a cofactor.

The protein resides in the cellular thylakoid membrane. The enzyme catalyses reduced [plastocyanin] + hnu + oxidized [2Fe-2S]-[ferredoxin] = oxidized [plastocyanin] + reduced [2Fe-2S]-[ferredoxin]. In terms of biological role, apoprotein for the two 4Fe-4S centers FA and FB of photosystem I (PSI); essential for photochemical activity. FB is the terminal electron acceptor of PSI, donating electrons to ferredoxin. The C-terminus interacts with PsaA/B/D and helps assemble the protein into the PSI complex. Required for binding of PsaD and PsaE to PSI. PSI is a plastocyanin/cytochrome c6-ferredoxin oxidoreductase, converting photonic excitation into a charge separation, which transfers an electron from the donor P700 chlorophyll pair to the spectroscopically characterized acceptors A0, A1, FX, FA and FB in turn. The sequence is that of Photosystem I iron-sulfur center from Trichormus variabilis (strain ATCC 29413 / PCC 7937) (Anabaena variabilis).